A 535-amino-acid chain; its full sequence is Probable anion transporter 2, chloroplastic (535 aa).

Residues 1 to 95 (MASIRSCVSV…RERAVAAMCS (95 aa)) constitute a chloroplast transit peptide. A run of 12 helical transmembrane segments spans residues 125-145 (VVAL…VMSV), 160-180 (FLGI…MVGG), 191-211 (VMAG…WAAS), 215-235 (IMLL…FPTM), 254-274 (ISMG…PIIM), 279-299 (LAGT…VWLF), 343-363 (IEMW…FVLL), 381-401 (AAWF…VAGA), 413-433 (VALV…VSLL), 443-463 (VAAV…AGYF), 483-503 (GIGT…VQWL), and 504-524 (GSFQ…TVFY).

Belongs to the major facilitator superfamily. Sodium/anion cotransporter (TC 2.A.1.14) family.

It is found in the plastid. It localises to the chloroplast membrane. Probable anion transporter. The chain is Probable anion transporter 2, chloroplastic (PHT4;2) from Oryza sativa subsp. japonica (Rice).